The primary structure comprises 91 residues: MPRSLKKGPFIDLHLLTKVEKAVESGNKKPIKTWSRRSMIIPTMIGLTIAVHNGRQHVPVFVTEEMIGHKLGEFAPTRTYRGHVADKKAKK.

The protein belongs to the universal ribosomal protein uS19 family.

Functionally, protein S19 forms a complex with S13 that binds strongly to the 16S ribosomal RNA. This Colwellia psychrerythraea (strain 34H / ATCC BAA-681) (Vibrio psychroerythus) protein is Small ribosomal subunit protein uS19.